Consider the following 80-residue polypeptide: MKQGIHPEYRKVVFMDSTTEFKFITGSTRYSNETITMEDGNEYPLIRVDVSSDSHPFYTGRQKFASADGRIERFNKKYQR.

The protein belongs to the bacterial ribosomal protein bL31 family. Type B subfamily. Part of the 50S ribosomal subunit.

The protein is Large ribosomal subunit protein bL31B of Exiguobacterium sp. (strain ATCC BAA-1283 / AT1b).